Reading from the N-terminus, the 224-residue chain is MQVLASLFGQSPFAPLQAHLELVSSTINVLFPLFSALKEGDYERVGVLAQLVSSKERQADGMKNDVRRHLASGVFLPVSRAALLEIISIQDSLADCAEDIAILLTVKELQFYPEFEELFFEFLQKTVQSFEAVAKTIREMDRLLESSFGGNRADKTRVLVSEVSNLEHECDLLQRELMKVFFSDDFAIGTKGFVLWMQIIKGISGISNNSEKLAYRVSMTLEEK.

It belongs to the UPF0111 family.

The protein is UPF0111 protein CT_691 of Chlamydia trachomatis serovar D (strain ATCC VR-885 / DSM 19411 / UW-3/Cx).